We begin with the raw amino-acid sequence, 311 residues long: Beta-lactamase (311 aa).

A signal peptide (tat-type signal) is located at residues 1-36 (MRKPTSSLTRRSVLGAGLGLGGALALGSTTASAASA). S86 serves as the catalytic Acyl-ester intermediate. 252 to 254 (KSG) contacts substrate.

It belongs to the class-A beta-lactamase family. In terms of processing, predicted to be exported by the Tat system. The position of the signal peptide cleavage has not been experimentally proven.

The catalysed reaction is a beta-lactam + H2O = a substituted beta-amino acid. Hydrolyzes benzylpenicillin and cloxacillin (at 10% of the rate of benzylpenicillin). The protein is Beta-lactamase (bla) of Streptomyces cellulosae.